The primary structure comprises 78 residues: D-alanyl carrier protein (78 aa).

Residues 1–78 form the Carrier domain; that stretch reads MEFREQVLDL…KIVEALEELK (78 aa). The residue at position 36 (serine 36) is an O-(pantetheine 4'-phosphoryl)serine.

It belongs to the DltC family. 4'-phosphopantetheine is transferred from CoA to a specific serine of apo-DCP.

It localises to the cytoplasm. It participates in cell wall biogenesis; lipoteichoic acid biosynthesis. In terms of biological role, carrier protein involved in the D-alanylation of lipoteichoic acid (LTA). The loading of thioester-linked D-alanine onto DltC is catalyzed by D-alanine--D-alanyl carrier protein ligase DltA. The DltC-carried D-alanyl group is further transferred to cell membrane phosphatidylglycerol (PG) by forming an ester bond, probably catalyzed by DltD. D-alanylation of LTA plays an important role in modulating the properties of the cell wall in Gram-positive bacteria, influencing the net charge of the cell wall. The polypeptide is D-alanyl carrier protein (Staphylococcus carnosus (strain TM300)).